Here is a 136-residue protein sequence, read N- to C-terminus: Holo-[acyl-carrier-protein] synthase (136 aa).

Mg(2+) contacts are provided by D8 and E62.

The protein belongs to the P-Pant transferase superfamily. AcpS family. The cofactor is Mg(2+).

It is found in the cytoplasm. The catalysed reaction is apo-[ACP] + CoA = holo-[ACP] + adenosine 3',5'-bisphosphate + H(+). In terms of biological role, transfers the 4'-phosphopantetheine moiety from coenzyme A to a Ser of acyl-carrier-protein. The protein is Holo-[acyl-carrier-protein] synthase of Polynucleobacter necessarius subsp. necessarius (strain STIR1).